The chain runs to 434 residues: Citrate synthase (434 aa).

Residues His-310 and Asp-368 contribute to the active site.

It belongs to the citrate synthase family.

It catalyses the reaction oxaloacetate + acetyl-CoA + H2O = citrate + CoA + H(+). It functions in the pathway carbohydrate metabolism; tricarboxylic acid cycle; isocitrate from oxaloacetate: step 1/2. The chain is Citrate synthase (gltA) from Bradyrhizobium diazoefficiens (strain JCM 10833 / BCRC 13528 / IAM 13628 / NBRC 14792 / USDA 110).